The following is a 224-amino-acid chain: Phosphoribosylformylglycinamidine synthase subunit PurQ (224 aa).

The Glutamine amidotransferase type-1 domain occupies 3–224 (FGVVVFPGSN…GLLEKVVALA (222 aa)). Cys86 serves as the catalytic Nucleophile. Residues His195 and Glu197 contribute to the active site.

Part of the FGAM synthase complex composed of 1 PurL, 1 PurQ and 2 PurS subunits.

The protein localises to the cytoplasm. The enzyme catalyses N(2)-formyl-N(1)-(5-phospho-beta-D-ribosyl)glycinamide + L-glutamine + ATP + H2O = 2-formamido-N(1)-(5-O-phospho-beta-D-ribosyl)acetamidine + L-glutamate + ADP + phosphate + H(+). The catalysed reaction is L-glutamine + H2O = L-glutamate + NH4(+). Its pathway is purine metabolism; IMP biosynthesis via de novo pathway; 5-amino-1-(5-phospho-D-ribosyl)imidazole from N(2)-formyl-N(1)-(5-phospho-D-ribosyl)glycinamide: step 1/2. Functionally, part of the phosphoribosylformylglycinamidine synthase complex involved in the purines biosynthetic pathway. Catalyzes the ATP-dependent conversion of formylglycinamide ribonucleotide (FGAR) and glutamine to yield formylglycinamidine ribonucleotide (FGAM) and glutamate. The FGAM synthase complex is composed of three subunits. PurQ produces an ammonia molecule by converting glutamine to glutamate. PurL transfers the ammonia molecule to FGAR to form FGAM in an ATP-dependent manner. PurS interacts with PurQ and PurL and is thought to assist in the transfer of the ammonia molecule from PurQ to PurL. The sequence is that of Phosphoribosylformylglycinamidine synthase subunit PurQ from Nostoc sp. (strain PCC 7120 / SAG 25.82 / UTEX 2576).